The sequence spans 335 residues: Glucokinase (335 aa).

11-16 (ADIGGT) serves as a coordination point for ATP.

The protein belongs to the bacterial glucokinase family.

The protein localises to the cytoplasm. It catalyses the reaction D-glucose + ATP = D-glucose 6-phosphate + ADP + H(+). The sequence is that of Glucokinase from Xanthomonas oryzae pv. oryzae (strain MAFF 311018).